A 131-amino-acid chain; its full sequence is Snaclec bitiscetin subunit alpha (131 aa).

3 cysteine pairs are disulfide-bonded: Cys4–Cys15, Cys32–Cys125, and Cys100–Cys117. Positions Tyr11–Lys126 constitute a C-type lectin domain.

The protein belongs to the snaclec family. In terms of assembly, heterodimer of subunits alpha and beta; disulfide-linked. In terms of tissue distribution, expressed by the venom gland.

It localises to the secreted. Snaclec that binds to von Willebrand factor (VWF) and induces its interaction with GPIbalpha (GP1BA) (via the vWF A1 domain), resulting in platelet aggregation. The protein is Snaclec bitiscetin subunit alpha of Bitis arietans (African puff adder).